The primary structure comprises 573 residues: Arylsulfatase I (573 aa).

A signal peptide spans methionine 1–alanine 23. Ca(2+) is bound by residues aspartate 56, aspartate 57, and cysteine 94. Residue cysteine 94 is the Nucleophile of the active site. Residue cysteine 94 is modified to 3-oxoalanine (Cys). Substrate is bound at residue lysine 148. Histidine 150 is a catalytic residue. Substrate is bound at residue histidine 240. N-linked (GlcNAc...) asparagine glycosylation is found at asparagine 277 and asparagine 289. Positions 298 and 299 each coordinate Ca(2+). Residue lysine 316 coordinates substrate. N-linked (GlcNAc...) asparagine glycans are attached at residues asparagine 467 and asparagine 497. The tract at residues phenylalanine 516–lysine 550 is disordered. A compositionally biased stretch (acidic residues) spans serine 526 to glutamate 536.

This sequence belongs to the sulfatase family. It depends on Ca(2+) as a cofactor. The oxidation of Cys-94 residue to 3-oxoalanine (also known as C(alpha)-formylglycine) by SUMF1/Sulfatase-modifying factor 1, seems critical for catalytic activity.

It localises to the secreted. The protein resides in the endoplasmic reticulum. In terms of biological role, displays arylsulfatase activity at neutral pH, when co-expressed with SUMF1; arylsulfatase activity is measured in the secretion medium of retinal cell line, but no activity is recorded when measured in cell extracts. The sequence is that of Arylsulfatase I (ARSI) from Canis lupus familiaris (Dog).